A 489-amino-acid chain; its full sequence is Probable cytosol aminopeptidase (489 aa).

Lys-254 and Asp-259 together coordinate Mn(2+). Lys-266 is an active-site residue. 3 residues coordinate Mn(2+): Asp-277, Asp-336, and Glu-338. Residue Arg-340 is part of the active site.

The protein belongs to the peptidase M17 family. Requires Mn(2+) as cofactor.

It localises to the cytoplasm. The catalysed reaction is Release of an N-terminal amino acid, Xaa-|-Yaa-, in which Xaa is preferably Leu, but may be other amino acids including Pro although not Arg or Lys, and Yaa may be Pro. Amino acid amides and methyl esters are also readily hydrolyzed, but rates on arylamides are exceedingly low.. It carries out the reaction Release of an N-terminal amino acid, preferentially leucine, but not glutamic or aspartic acids.. Presumably involved in the processing and regular turnover of intracellular proteins. Catalyzes the removal of unsubstituted N-terminal amino acids from various peptides. The protein is Probable cytosol aminopeptidase of Cereibacter sphaeroides (strain ATCC 17025 / ATH 2.4.3) (Rhodobacter sphaeroides).